The chain runs to 622 residues: Chaperone protein HscA homolog (622 aa).

The protein belongs to the heat shock protein 70 family.

In terms of biological role, chaperone involved in the maturation of iron-sulfur cluster-containing proteins. Has a low intrinsic ATPase activity which is markedly stimulated by HscB. The protein is Chaperone protein HscA homolog of Burkholderia orbicola (strain MC0-3).